Reading from the N-terminus, the 372-residue chain is Maltose/maltodextrin import ATP-binding protein MalK (372 aa).

Residues 4–234 (VSLRNVGKSY…PANRFVAGFI (231 aa)) enclose the ABC transporter domain. 36 to 43 (GPSGCGKS) is a binding site for ATP.

This sequence belongs to the ABC transporter superfamily. Maltooligosaccharide importer (TC 3.A.1.1.1) family. As to quaternary structure, the complex is composed of two ATP-binding proteins (MalK), two transmembrane proteins (MalG and MalK) and a solute-binding protein (MalE).

The protein localises to the cell inner membrane. It catalyses the reaction D-maltose(out) + ATP + H2O = D-maltose(in) + ADP + phosphate + H(+). Part of the ABC transporter complex MalEFGK involved in maltose/maltodextrin import. Responsible for energy coupling to the transport system. The polypeptide is Maltose/maltodextrin import ATP-binding protein MalK (Mannheimia succiniciproducens (strain KCTC 0769BP / MBEL55E)).